Reading from the N-terminus, the 116-residue chain is Nicotine metabolites export pump subunit NepA (116 aa).

4 helical membrane-spanning segments follow: residues 10–30, 42–62, 67–87, and 92–112; these read LTIWPLLLLAIAAEVAATSLL, TVAVACLYTVAFALLAQILKF, IAYALWAGLGTASVAVIGVLF, and FSWKHAIGLALVVTGVVTLNL.

The protein belongs to the drug/metabolite transporter (DMT) superfamily. Small multidrug resistance (SMR) (TC 2.A.7.1) family. NepA/NepB subfamily. The efflux pump is composed of NepA and NepB.

It localises to the cell membrane. In terms of biological role, component of an efflux pump responsible for the transport of nicotine breakdown products, in particular methylamine, out of the cell. This pump apparently serves as a metabolic valve for nicotine catabolites and may protect the bacteria from the potentially toxic side effects of these compounds. In Paenarthrobacter nicotinovorans (Arthrobacter nicotinovorans), this protein is Nicotine metabolites export pump subunit NepA (nepA).